A 116-amino-acid polypeptide reads, in one-letter code: Large ribosomal subunit protein bL19 (116 aa).

It belongs to the bacterial ribosomal protein bL19 family.

Functionally, this protein is located at the 30S-50S ribosomal subunit interface and may play a role in the structure and function of the aminoacyl-tRNA binding site. This is Large ribosomal subunit protein bL19 from Mycoplasma mobile (strain ATCC 43663 / 163K / NCTC 11711) (Mesomycoplasma mobile).